A 251-amino-acid chain; its full sequence is Large ribosomal subunit protein uL3 (251 aa).

Gln151 is subject to N5-methylglutamine. A disordered region spans residues 214 to 251 (KDAPFPAGLKSAANSNSAPTETPAEEVAAPEATEGQEG). The segment covering 231-251 (APTETPAEEVAAPEATEGQEG) has biased composition (low complexity).

This sequence belongs to the universal ribosomal protein uL3 family. Part of the 50S ribosomal subunit. Forms a cluster with proteins L14 and L19. Methylated by PrmB.

Functionally, one of the primary rRNA binding proteins, it binds directly near the 3'-end of the 23S rRNA, where it nucleates assembly of the 50S subunit. In Rhizorhabdus wittichii (strain DSM 6014 / CCUG 31198 / JCM 15750 / NBRC 105917 / EY 4224 / RW1) (Sphingomonas wittichii), this protein is Large ribosomal subunit protein uL3.